We begin with the raw amino-acid sequence, 91 residues long: Pyruvate kinase (91 aa).

Substrate is bound at residue Arg-48. Positions 50, 52, 82, and 83 each coordinate K(+). An ATP-binding site is contributed by 50 to 53 (NFSH). Arg-89 provides a ligand contact to ATP.

The protein belongs to the pyruvate kinase family. As to quaternary structure, homotetramer. It depends on Mg(2+) as a cofactor. K(+) is required as a cofactor.

The catalysed reaction is pyruvate + ATP = phosphoenolpyruvate + ADP + H(+). It participates in carbohydrate degradation; glycolysis; pyruvate from D-glyceraldehyde 3-phosphate: step 5/5. In Leishmania braziliensis, this protein is Pyruvate kinase.